A 237-amino-acid chain; its full sequence is Ribonuclease PH (237 aa).

Residues arginine 86 and 124 to 126 (GTR) contribute to the phosphate site.

The protein belongs to the RNase PH family. As to quaternary structure, homohexameric ring arranged as a trimer of dimers.

The catalysed reaction is tRNA(n+1) + phosphate = tRNA(n) + a ribonucleoside 5'-diphosphate. Its function is as follows. Phosphorolytic 3'-5' exoribonuclease that plays an important role in tRNA 3'-end maturation. Removes nucleotide residues following the 3'-CCA terminus of tRNAs; can also add nucleotides to the ends of RNA molecules by using nucleoside diphosphates as substrates, but this may not be physiologically important. Probably plays a role in initiation of 16S rRNA degradation (leading to ribosome degradation) during starvation. This Myxococcus xanthus (strain DK1622) protein is Ribonuclease PH.